We begin with the raw amino-acid sequence, 220 residues long: Probable nicotinate-nucleotide adenylyltransferase (220 aa).

This sequence belongs to the NadD family.

The catalysed reaction is nicotinate beta-D-ribonucleotide + ATP + H(+) = deamido-NAD(+) + diphosphate. The protein operates within cofactor biosynthesis; NAD(+) biosynthesis; deamido-NAD(+) from nicotinate D-ribonucleotide: step 1/1. Its function is as follows. Catalyzes the reversible adenylation of nicotinate mononucleotide (NaMN) to nicotinic acid adenine dinucleotide (NaAD). This is Probable nicotinate-nucleotide adenylyltransferase from Saccharophagus degradans (strain 2-40 / ATCC 43961 / DSM 17024).